The primary structure comprises 44 residues: Brevinin-1PLa (44 aa).

The propeptide occupies 1–18 (NAEEERRDEPDETDVEVE). Cys38 and Cys44 are oxidised to a cystine.

As to expression, expressed by the skin glands.

The protein resides in the secreted. Antimicrobial peptide. The sequence is that of Brevinin-1PLa from Lithobates palustris (Pickerel frog).